Reading from the N-terminus, the 136-residue chain is Small ribosomal subunit protein eS19 (136 aa).

Lysine 23 bears the N6-acetyllysine mark. Arginine 67 is modified (omega-N-methylarginine). N6-acetyllysine occurs at positions 111 and 115. Residues 116–136 (DQDGGRKLTPQGQRDLDRIAG) are disordered.

This sequence belongs to the eukaryotic ribosomal protein eS19 family. Component of the small ribosomal subunit. Part of the small subunit (SSU) processome, composed of more than 70 proteins and the RNA chaperone small nucleolar RNA (snoRNA) U3. Interacts with RPS19BP1; the interaction is direct and mediates the integration of RPS19 in state post-A1. Interacts with RPS19BP1.

Its subcellular location is the cytoplasm. The protein resides in the nucleus. The protein localises to the nucleolus. Functionally, component of the small ribosomal subunit. The ribosome is a large ribonucleoprotein complex responsible for the synthesis of proteins in the cell. Required for pre-rRNA processing and maturation of 40S ribosomal subunits. Part of the small subunit (SSU) processome, first precursor of the small eukaryotic ribosomal subunit. During the assembly of the SSU processome in the nucleolus, many ribosome biogenesis factors, an RNA chaperone and ribosomal proteins associate with the nascent pre-rRNA and work in concert to generate RNA folding, modifications, rearrangements and cleavage as well as targeted degradation of pre-ribosomal RNA by the RNA exosome. The chain is Small ribosomal subunit protein eS19 (RPS19) from Sus scrofa (Pig).